The primary structure comprises 362 residues: Major capsid protein VP1 (362 aa).

The tract at residues 1–21 (MAPTKRKGSCPGAAPKKPKEP) is disordered. Positions 5–19 (KRKGSCPGAAPKKPK) match the Bipartite nuclear localization signal motif. The segment at 302–362 (ISFLLSDLIN…EFGQTTTRMQ (61 aa)) is C-terminal arm. Threonine 338 is modified (phosphothreonine; by host).

It belongs to the polyomaviruses coat protein VP1 family. Homomultimer; disulfide-linked. The virus capsid is composed of 72 icosahedral units, each one composed of five disulfide-linked copies of VP1. Interacts with agnoprotein. Interacts with minor capsid proteins VP2 and VP3. Interacts with host HSPA8; this interaction probably participates in virus assembly. Interacts with host SP1; this interaction enhances the efficiency of viral packaging.

The protein localises to the virion. The protein resides in the host nucleus. It localises to the host endoplasmic reticulum. Its function is as follows. Forms an icosahedral capsid with a T=7 symmetry and a 40 nm diameter. The capsid is composed of 72 pentamers linked to each other by disulfide bonds and associated with VP2 or VP3 proteins. Binds to N-glycolylneuraminic analog of the ganglioside GM1 on the cell surface to provide virion attachment to target cell. Once attached, the virion is internalized by caveolin-mediated endocytosis and traffics to the endoplasmic reticulum. Inside the endoplasmic reticulum, the protein folding machinery isomerizes VP1 interpentamer disulfide bonds, thereby triggering initial uncoating. Next, the virion uses the endoplasmic reticulum-associated degradation machinery to probably translocate in the cytosol before reaching the nucleus. Nuclear entry of the viral DNA involves the selective exposure and importin recognition of VP2/Vp3 nuclear localization signal. The assembly takes place in the cell nucleus. Encapsulates the genomic DNA and participates in rearranging nucleosomes around the viral DNA. The viral progenies exit the cells by lytic release. This is Major capsid protein VP1 from Macaca (macaques).